The chain runs to 235 residues: Small ribosomal subunit protein uS2 (235 aa).

Belongs to the universal ribosomal protein uS2 family.

This chain is Small ribosomal subunit protein uS2, found in Thermoanaerobacter pseudethanolicus (strain ATCC 33223 / 39E) (Clostridium thermohydrosulfuricum).